The chain runs to 818 residues: Serine/threonine-protein phosphatase 4 regulatory subunit 3 (818 aa).

One can recognise a WH1 domain in the interval 1–100 (MTDTRRRVKV…DEIWEKICQV (100 aa)). The segment covering 670 to 681 (FNTDEEDLEDGE) has biased composition (acidic residues). The interval 670–818 (FNTDEEDLED…PLSKKSKLSS (149 aa)) is disordered. Residues 703–718 (FMERKKLKDSEEKEVL) are compositionally biased toward basic and acidic residues. Residues 729–775 (SPSFKLSFSSSPKASLSSPPTASLHPGSPGSPSSPGTGARSSPPSAA) show a composition bias toward low complexity. 2 positions are modified to phosphoserine: serine 769 and serine 770. Positions 788 to 803 (YPDDDEEDEDEEDADS) are enriched in acidic residues.

This sequence belongs to the SMEK family. As to quaternary structure, serine/threonine-protein phosphatase 4 (PP4) occurs in different assemblies of the catalytic and one or more regulatory subunits.

Regulatory subunit of serine/threonine-protein phosphatase 4. The chain is Serine/threonine-protein phosphatase 4 regulatory subunit 3 (smek1) from Danio rerio (Zebrafish).